Consider the following 110-residue polypeptide: MKILRPPFRALSDENGVTNTFFTVYVVELALRMSPMPISVQRKESGDAESVYQQVRQALEQGQPRLLEMTCEKVEGKRLSVLTSDVLAVQIYEKTAASGGSKRPGFSLDS.

It belongs to the UPF0367 family.

The chain is UPF0367 protein sync_2587 from Synechococcus sp. (strain CC9311).